Here is a 134-residue protein sequence, read N- to C-terminus: Estradiol 17-beta-dehydrogenase 8 (134 aa).

Ser38 lines the substrate pocket. Position 42 is an N6-succinyllysine (Lys42). The active-site Proton acceptor is the Tyr51. NAD(+) contacts are provided by residues Tyr51–Lys55 and Ile84–Thr86. Residue Lys55 is modified to N6-succinyllysine.

Belongs to the short-chain dehydrogenases/reductases (SDR) family. As to quaternary structure, heterotetramer with CBR4; contains two molecules of HSD17B8 and CBR4.

The protein localises to the mitochondrion matrix. It catalyses the reaction 17beta-estradiol + NAD(+) = estrone + NADH + H(+). It carries out the reaction 17beta-estradiol + NADP(+) = estrone + NADPH + H(+). The catalysed reaction is testosterone + NAD(+) = androst-4-ene-3,17-dione + NADH + H(+). It functions in the pathway steroid biosynthesis; estrogen biosynthesis. The protein operates within lipid metabolism; fatty acid biosynthesis. In terms of biological role, NAD-dependent 17-beta-hydroxysteroid dehydrogenase with highest activity towards estradiol. Has very low activity towards testosterone. The heterotetramer with CBR4 has NADH-dependent 3-ketoacyl-acyl carrier protein reductase activity, and thereby plays a role in mitochondrial fatty acid biosynthesis. Within the heterotetramer, HSD17B8 binds NADH; CBR4 binds NADPD. This Callithrix jacchus (White-tufted-ear marmoset) protein is Estradiol 17-beta-dehydrogenase 8 (HSD17B8).